Here is a 777-residue protein sequence, read N- to C-terminus: Glucocorticoid receptor (777 aa).

Basic and acidic residues predominate over residues Met1 to Asn14. The interval Met1 to Glu22 is disordered. The modulating stretch occupies residues Met1–Leu420. Thr8 bears the Phosphothreonine mark. Arg23 carries the post-translational modification Omega-N-methylarginine. 4 positions are modified to phosphoserine: Ser45, Ser113, Ser134, and Ser141. The segment at Asn130–Leu183 is disordered. Residues Ser134–Ala150 show a composition bias toward low complexity. Basic and acidic residues predominate over residues Pro151 to Val163. Polar residues predominate over residues Ser164–Thr174. Phosphoserine is present on residues Ser203, Ser211, and Ser226. Residue Lys258 forms a Glycyl lysine isopeptide (Lys-Gly) (interchain with G-Cter in SUMO2) linkage. A Phosphoserine modification is found at Ser267. Glycyl lysine isopeptide (Lys-Gly) (interchain with G-Cter in SUMO); alternate cross-links involve residues Lys277 and Lys293. Glycyl lysine isopeptide (Lys-Gly) (interchain with G-Cter in SUMO2); alternate cross-links involve residues Lys277 and Lys293. A compositionally biased stretch (low complexity) spans Ser394 to Thr414. The disordered stretch occupies residues Ser394 to Gly415. Ser404 is modified (phosphoserine). Lys419 is covalently cross-linked (Glycyl lysine isopeptide (Lys-Gly) (interchain with G-Cter in ubiquitin)). NR C4-type zinc fingers lie at residues Cys421–Cys441 and Cys457–Cys481. A DNA-binding region (nuclear receptor) is located at residues Cys421–Met486. Lys480, Lys492, Lys494, and Lys495 each carry N6-acetyllysine. Positions Gly485–Lys777 are interaction with CLOCK. Positions Asn487–Ala523 are hinge. Positions Thr524–Thr758 constitute an NR LBD domain. Residues Leu532–Leu697 form an interaction with CRY1 region. Residue Lys703 forms a Glycyl lysine isopeptide (Lys-Gly) (interchain with G-Cter in SUMO) linkage.

The protein belongs to the nuclear hormone receptor family. NR3 subfamily. Heteromultimeric cytoplasmic complex with HSP90AA1, HSPA1A/HSPA1B, and FKBP5 or another immunophilin such as PPID, STIP1, or the immunophilin homolog PPP5C. Upon ligand binding FKBP5 dissociates from the complex and FKBP4 takes its place, thereby linking the complex to dynein and mediating transport to the nucleus, where the complex dissociates. Probably forms a complex composed of chaperones HSP90 and HSP70, co-chaperones CDC37, PPP5C, TSC1 and client protein TSC2, CDK4, AKT, RAF1 and NR3C1; this complex does not contain co-chaperones STIP1/HOP and PTGES3/p23. Directly interacts with UNC45A. Binds to DNA as a homodimer, and as heterodimer with NR3C2 or the retinoid X receptor. Binds STAT5A and STAT5B homodimers and heterodimers. Interacts with NRIP1, POU2F1, POU2F2 and TRIM28. Interacts with several coactivator complexes, including the SMARCA4 complex, CREBBP/EP300, TADA2L (Ada complex) and p160 coactivators such as NCOA2 and NCOA6. Interaction with BAG1 inhibits transactivation. Interacts with HEXIM1 and TGFB1I1. Interacts with NCOA1. Interacts with NCOA3, SMARCA4, SMARCC1, SMARCD1, and SMARCE1. Interacts with CLOCK, CRY1 and CRY2 in a ligand-dependent fashion. Interacts with CIART. Interacts with RWDD3. Interacts with UBE2I/UBC9 and this interaction is enhanced in the presence of RWDD3. Interacts with GRIP1. Interacts with NR4A3 (via nuclear receptor DNA-binding domain), represses transcription activity of NR4A3 on the POMC promoter Nur response element (NurRE). Directly interacts with PNRC2 to attract and form a complex with UPF1 and DCP1A; the interaction leads to rapid mRNA degradation. Interacts with GSK3B. Interacts with FNIP1 and FNIP2. Interacts (via C-terminus) with HNRNPU (via C-terminus). Interacts with MCM3AP. Interacts (via domain NR LBD) with HSP90AA1 and HSP90AB1. In the absence of hormonal ligand, interacts with TACC1. Interacts (via NR LBD domain) with ZNF764 (via KRAB domain); the interaction regulates transcription factor activity of NR3C1 by directing its actions toward certain biologic pathways. Post-translationally, acetylation by CLOCK reduces its binding to glucocorticoid response elements and its transcriptional activity. In terms of processing, increased proteasome-mediated degradation in response to glucocorticoids. Phosphorylated in the absence of hormone; becomes hyperphosphorylated in the presence of glucocorticoid. The Ser-203, Ser-226 and Ser-404-phosphorylated forms are mainly cytoplasmic, and the Ser-211-phosphorylated form is nuclear. Phosphorylation at Ser-211 increases transcriptional activity. Phosphorylation at Ser-203, Ser-226 and Ser-404 decreases signaling capacity. Phosphorylation at Ser-404 may protect from glucocorticoid-induced apoptosis. Phosphorylation at Ser-203 and Ser-211 is not required in regulation of chromosome segregation. May be dephosphorylated by PPP5C, attenuates NR3C1 action. Post-translationally, ubiquitinated by UBR5, leading to its degradation: UBR5 specifically recognizes and binds ligand-bound NR3C1 when it is not associated with coactivators (NCOAs). In presence of NCOAs, the UBR5-degron is not accessible, preventing its ubiquitination and degradation. In terms of processing, sumoylation at Lys-277 and Lys-293 negatively regulates its transcriptional activity. Sumoylation at Lys-703 positively regulates its transcriptional activity in the presence of RWDD3. Sumoylation at Lys-277 and Lys-293 is dispensable whereas sumoylation at Lys-703 is critical for the stimulatory effect of RWDD3 on its transcriptional activity. Heat shock increases sumoylation in a RWDD3-dependent manner.

It localises to the cytoplasm. The protein localises to the nucleus. It is found in the mitochondrion. Its subcellular location is the cytoskeleton. The protein resides in the spindle. It localises to the microtubule organizing center. The protein localises to the centrosome. It is found in the chromosome. Its subcellular location is the nucleoplasm. In terms of biological role, receptor for glucocorticoids (GC). Has a dual mode of action: as a transcription factor that binds to glucocorticoid response elements (GRE), both for nuclear and mitochondrial DNA, and as a modulator of other transcription factors. Affects inflammatory responses, cellular proliferation and differentiation in target tissues. Involved in chromatin remodeling. Plays a role in rapid mRNA degradation by binding to the 5' UTR of target mRNAs and interacting with PNRC2 in a ligand-dependent manner which recruits the RNA helicase UPF1 and the mRNA-decapping enzyme DCP1A, leading to RNA decay. Could act as a coactivator for STAT5-dependent transcription upon growth hormone (GH) stimulation and could reveal an essential role of hepatic GR in the control of body growth. Mediates glucocorticoid-induced apoptosis. Promotes accurate chromosome segregation during mitosis. May act as a tumor suppressor. May play a negative role in adipogenesis through the regulation of lipolytic and antilipogenic gene expression. The chain is Glucocorticoid receptor (NR3C1) from Saguinus oedipus (Cotton-top tamarin).